The sequence spans 439 residues: Tol-Pal system protein TolB (439 aa).

The N-terminal stretch at 1–22 (MKKPLRWLAALTVLLLPLSALA) is a signal peptide.

Belongs to the TolB family. As to quaternary structure, the Tol-Pal system is composed of five core proteins: the inner membrane proteins TolA, TolQ and TolR, the periplasmic protein TolB and the outer membrane protein Pal. They form a network linking the inner and outer membranes and the peptidoglycan layer.

Its subcellular location is the periplasm. In terms of biological role, part of the Tol-Pal system, which plays a role in outer membrane invagination during cell division and is important for maintaining outer membrane integrity. The sequence is that of Tol-Pal system protein TolB from Xanthomonas oryzae pv. oryzae (strain KACC10331 / KXO85).